The chain runs to 232 residues: Charged multivesicular body protein 4c (232 aa).

2 disordered regions span residues 1–23 (MSKL…PSAQ) and 177–232 (NKKM…AWAT). Residues 1-153 (MSKLGKFFKG…EISEAFSQRV (153 aa)) are intramolecular interaction with C-terminus. Coiled-coil stretches lie at residues 21–45 (SAQE…YLEN) and 125–185 (LNKI…SLEL). Residues 154-232 (QFADGFDEAE…DFKQLAAWAT (79 aa)) form an intramolecular interaction with N-terminus region. Position 210 is a phosphoserine; by AURKB (S210).

It belongs to the SNF7 family. Probable core component of the endosomal sorting required for transport complex III (ESCRT-III). ESCRT-III components are thought to multimerize to form a flat lattice on the perimeter membrane of the endosome. Several assembly forms of ESCRT-III may exist that interact and act sequentially. Self-associates. Interacts with CHMP2A. Interacts with CHMP4A. Interacts with CHMP4B. Interacts with CHMP6. Interacts with VPS4A. Interacts with PDCD6IP; the interaction is direct. Phosphorylated at Ser-210 by AURKB during cytokinesis: together with ZFYVE19/ANCHR, phosphorylated CHMP4C retains abscission-competent VPS4 (VPS4A and/or VPS4B) at the midbody ring until abscission checkpoint signaling is terminated at late cytokinesis.

The protein resides in the cytoplasm. The protein localises to the cytosol. Its subcellular location is the late endosome membrane. It is found in the midbody. It localises to the midbody ring. In terms of biological role, probable core component of the endosomal sorting required for transport complex III (ESCRT-III) which is involved in multivesicular bodies (MVBs) formation and sorting of endosomal cargo proteins into MVBs. MVBs contain intraluminal vesicles (ILVs) that are generated by invagination and scission from the limiting membrane of the endosome and mostly are delivered to lysosomes enabling degradation of membrane proteins, such as stimulated growth factor receptors, lysosomal enzymes and lipids. The MVB pathway appears to require the sequential function of ESCRT-O, -I,-II and -III complexes. ESCRT-III proteins mostly dissociate from the invaginating membrane before the ILV is released. The ESCRT machinery also functions in topologically equivalent membrane fission events, such as the terminal stages of cytokinesis. Key component of the cytokinesis checkpoint, a process required to delay abscission to prevent both premature resolution of intercellular chromosome bridges and accumulation of DNA damage: upon phosphorylation by AURKB, together with ZFYVE19/ANCHR, retains abscission-competent VPS4 (VPS4A and/or VPS4B) at the midbody ring until abscission checkpoint signaling is terminated at late cytokinesis. Deactivation of AURKB results in dephosphorylation of CHMP4C followed by its dissociation from ANCHR and VPS4 and subsequent abscission. ESCRT-III proteins are believed to mediate the necessary vesicle extrusion and/or membrane fission activities, possibly in conjunction with the AAA ATPase VPS4. CHMP4A/B/C are required for the exosomal release of SDCBP, CD63 and syndecan. This is Charged multivesicular body protein 4c (Chmp4c) from Mus musculus (Mouse).